Consider the following 213-residue polypeptide: Maleamate amidohydrolase (213 aa).

Catalysis depends on Cys-154, which acts as the Nucleophile.

Belongs to the isochorismatase family.

The catalysed reaction is maleamate + H2O = maleate + NH4(+). It functions in the pathway cofactor degradation; nicotinate degradation. Its function is as follows. Maleamate amidase that transforms maleamate into maleate and ammonia in the aerobic nicotinate degradation pathway. This chain is Maleamate amidohydrolase (nicF), found in Pseudomonas putida (strain ATCC 47054 / DSM 6125 / CFBP 8728 / NCIMB 11950 / KT2440).